Here is a 183-residue protein sequence, read N- to C-terminus: Ferredoxin-2, mitochondrial (183 aa).

The N-terminal 52 residues, 1–52 (MAASMARGGVSARVLLQAARGTWWNRPGGTSGSGEGVALGTTRKFQATGSRP), are a transit peptide targeting the mitochondrion. A disordered region spans residues 45-65 (FQATGSRPAGEEDAGGPERPG). The 2Fe-2S ferredoxin-type domain maps to 68 to 170 (VNVVFVDRSG…GAEFTLPKIT (103 aa)). The [2Fe-2S] cluster site is built by cysteine 105, cysteine 111, cysteine 114, and cysteine 151.

Belongs to the adrenodoxin/putidaredoxin family. Component of the mitochondrial core iron-sulfur cluster (ISC) complex composed of NFS1, LYRM4, NDUFAB1, ISCU, FXN, and FDX2; this complex is a heterohexamer containing two copies of each monomer. Form a heterodimer complex with NFS1. Interacts (in both their reduced and oxidized states) with the cysteine desulfurase complex; this interaction stimulates cysteine desulfurase activity, and serves as a reductant for Fe-S cluster assembly. The cofactor is [2Fe-2S] cluster. Widely expressed, with highest levels in testis, kidney and brain (at protein level). Expressed in muscle (at protein level). Expressed in fibroblasts (at protein level).

The protein localises to the mitochondrion. The protein resides in the mitochondrion matrix. In terms of biological role, electron donor, of the core iron-sulfur cluster (ISC) assembly complex, that acts to reduce the persulfide into sulfide during [2Fe-2S] clusters assembly on the scaffolding protein ISCU. The core iron-sulfur cluster (ISC) assembly complex is involved in the de novo synthesis of a [2Fe-2S] cluster, the first step of the mitochondrial iron-sulfur protein biogenesis. This process is initiated by the cysteine desulfurase complex (NFS1:LYRM4:NDUFAB1) that produces persulfide which is delivered on the scaffold protein ISCU in a FXN-dependent manner. Then this complex is stabilized by FDX2 which provides reducing equivalents to accomplish the [2Fe-2S] cluster assembly. Finally, the [2Fe-2S] cluster is transferred from ISCU to chaperone proteins, including HSCB, HSPA9 and GLRX5. Essential for coenzyme Q biosynthesis: together with FDXR, transfers the electrons required for the hydroxylation reaction performed by COQ6. The sequence is that of Ferredoxin-2, mitochondrial from Homo sapiens (Human).